The primary structure comprises 241 residues: Large ribosomal subunit protein uL1 (241 aa).

This sequence belongs to the universal ribosomal protein uL1 family. In terms of assembly, part of the 50S ribosomal subunit.

In terms of biological role, binds directly to 23S rRNA. The L1 stalk is quite mobile in the ribosome, and is involved in E site tRNA release. Functionally, protein L1 is also a translational repressor protein, it controls the translation of the L11 operon by binding to its mRNA. The protein is Large ribosomal subunit protein uL1 of Streptomyces avermitilis (strain ATCC 31267 / DSM 46492 / JCM 5070 / NBRC 14893 / NCIMB 12804 / NRRL 8165 / MA-4680).